The chain runs to 234 residues: MKTNILTIIILSCVFSYGSQLAYADENLKDLKRSLRFAYNITPCDYENVEIAFVTTNSIHINTKQKRSECILYVDSIVSLGITDQFIKGDKVDVFGLPYNFSPPYVDNIYGGIVKHSNQGNKSLQFVGILNQDGKETYLPSEAVRIKKKQFTLQEFDFKIRKFLMEKYNIYDSESRYTSGSLFLATKDSKHYEVDLFNKDDKLLSRDSFFKRYKDNKIFNSEEISHFDIYLKTH.

The signal sequence occupies residues Met1–Ala24.

The protein belongs to the staphylococcal/streptococcal toxin family.

Its function is as follows. Mitogenic for human peripheral blood lymphocytes. The chain is Exotoxin type G (speG) from Streptococcus pyogenes serotype M1.